We begin with the raw amino-acid sequence, 61 residues long: Sperm protamine P1 (61 aa).

Residues 1 to 61 are disordered; it reads MARYRHSRSR…RRYHSHRRRY (61 aa).

It belongs to the protamine P1 family. In terms of tissue distribution, testis.

It localises to the nucleus. It is found in the chromosome. Protamines substitute for histones in the chromatin of sperm during the haploid phase of spermatogenesis. They compact sperm DNA into a highly condensed, stable and inactive complex. This Notoryctes typhlops (Southern marsupial mole) protein is Sperm protamine P1 (PRM1).